A 431-amino-acid polypeptide reads, in one-letter code: Forkhead box protein P3 (431 aa).

Positions 1-68 are disordered; that stretch reads MPNPRPGKPS…SSLNPMPPSQ (68 aa). A compositionally biased stretch (low complexity) spans 10-25; the sequence is SAPSLALGPSPGASPS. Phosphoserine; by CDK2 is present on Ser19. Lys31 is modified (N6-acetyllysine). A Nuclear export signal motif is present at residues 68–76; the sequence is QLQLPTLPL. An LXXLL motif motif is present at residues 92-96; it reads LQALL. The essential for transcriptional repressor activity and for interaction with KAT5 and HDAC7 stretch occupies residues 106–190; the sequence is LSTVDAHART…STLSAMPQSS (85 aa). The interval 149-199 is interaction with IKZF4; it reads LPPGINVASLEWVSREPALLCTFPNPGAPRKDSTLSAMPQSSYPLLANGVC. The C2H2-type zinc finger occupies 197-222; the sequence is GVCKWPGCEKVFEEPEDFLKHCQADH. The Nuclear export signal signature appears at 239 to 248; the sequence is VQSLEQQLVL. Residues 239–260 are leucine-zipper; sequence VQSLEQQLVLEKEKLSAMQAHL. Residues Lys250 and Lys252 each participate in a glycyl lysine isopeptide (Lys-Gly) (interchain with G-Cter in ubiquitin) cross-link. N6-acetyllysine; alternate is present on residues Lys263 and Lys268. Residues Lys263 and Lys268 each participate in a glycyl lysine isopeptide (Lys-Gly) (interchain with G-Cter in ubiquitin); alternate cross-link. Residues 278-336 form an interaction with RUNX1 region; it reads GSCCIVAAGSQGSAVPAWSGPREAPDSLFAVRRHLWGSHGNSTFPEFLHNMDYFKFHNM. The fork-head DNA-binding region spans 337–423; that stretch reads RPPFTYATLI…RKKRSQRPSR (87 aa). A Glycyl lysine isopeptide (Lys-Gly) (interchain with G-Cter in ubiquitin) cross-link involves residue Lys393. The short motif at 414-417 is the Nuclear localization signal element; sequence RKKR. The residue at position 418 (Ser418) is a Phosphoserine. The propeptide occupies 418–431; it reads SQRPSRCSNPTPGP.

Homodimer. Dimerization is essential for its transcriptional regulator activity. Interacts with IKZF3. Interacts (via LXXLL motif) with RORA (via AF-2 motif). Interacts with HDAC9 in the absence of T-cell stimulation. Interacts with PPP1CA, PPP1CB, PPP1CG, KAT5, HDAC7, HSPA8, USP7, STUB1, HSPA1A/B, RUNX1, RUNX2, RUNX3, RELA, NFATC2, IKFZ4 and RORC. Phosphorylation at Ser-418 regulates its transcriptional repressor activity and consequently, regulatory T-cells (Treg) suppressive function. Phosphorylation by CDK2 negatively regulates its transcriptional activity and protein stability. Post-translationally, polyubiquitinated, leading to its proteasomal degradation in regulatory T-cells (Treg) which is mediated by STUB1 in a HSPA1A/B-dependent manner. Deubiquitinated by USP7 and USP44 leading to increase in protein stability. In terms of processing, acetylation on lysine residues stabilizes FOXP3 and promotes differentiation of T-cells into induced regulatory T-cells (iTregs) associated with suppressive functions. Acetylation is mediated by a coordinated action of KAT5 and EP300/p300 acetyltransferases: EP300/p300 is required to enhance KAT5 autoacetylation, promoting acetylation of FOXP3 by KAT5. Deacetylated by SIRT1. Undergoes proteolytic cleavage in activated regulatory T-cells (Treg), and can be cleaved at either the N- or C-terminal site, or at both sites.

The protein localises to the nucleus. It is found in the cytoplasm. Its function is as follows. Transcriptional regulator which is crucial for the development and inhibitory function of regulatory T-cells (Treg). Plays an essential role in maintaining homeostasis of the immune system by allowing the acquisition of full suppressive function and stability of the Treg lineage, and by directly modulating the expansion and function of conventional T-cells. Can act either as a transcriptional repressor or a transcriptional activator depending on its interactions with other transcription factors, histone acetylases and deacetylases. The suppressive activity of Treg involves the coordinate activation of many genes, including CTLA4 and TNFRSF18 by FOXP3 along with repression of genes encoding cytokines such as interleukin-2 (IL2) and interferon-gamma (IFNG). Inhibits cytokine production and T-cell effector function by repressing the activity of two key transcription factors, RELA and NFATC2. Mediates transcriptional repression of IL2 via its association with histone acetylase KAT5 and histone deacetylase HDAC7. Can activate the expression of TNFRSF18, IL2RA and CTLA4 and repress the expression of IL2 and IFNG via its association with transcription factor RUNX1. Inhibits the differentiation of IL17 producing helper T-cells (Th17) by antagonizing RORC function, leading to down-regulation of IL17 expression, favoring Treg development. Inhibits the transcriptional activator activity of RORA. Can repress the expression of IL2 and IFNG via its association with transcription factor IKZF4. This is Forkhead box protein P3 (FOXP3) from Macaca fascicularis (Crab-eating macaque).